The following is a 799-amino-acid chain: Target of rapamycin complex 1 subunit TCO89 (799 aa).

The segment at 18-41 (NASTVSHQSKPFRQFSTRSRAKSN) is disordered. A phosphothreonine mark is found at T52 and T82. Residues S84, S104, S107, S115, and S144 each carry the phosphoserine modification. Residues 97–126 (NQGKRSASFHSPVHNTLLSPKNSSHSNTGT) show a composition bias toward polar residues. 2 disordered regions span residues 97–171 (NQGK…DNIE) and 201–284 (LQSP…ADID). Residues 147-156 (DAQESKKSES) are compositionally biased toward basic and acidic residues. Acidic residues predominate over residues 157-170 (TTDEEVECFSEDNI). 2 positions are modified to phosphoserine: S203 and S215. Over residues 213-224 (DKSGTDGKENHR) the composition is skewed to basic and acidic residues. Positions 233–243 (LSSNNYFGESS) are enriched in polar residues. Basic and acidic residues predominate over residues 244–253 (HSIEHQKDGE). The span at 254–269 (TSPSSIETKLNATSVI) shows a compositional bias: polar residues. S290 is modified (phosphoserine). The tract at residues 324-391 (AHKSNQKPSH…PDDISSAGTK (68 aa)) is disordered. Basic and acidic residues predominate over residues 332-346 (SHSDEQFDQEDHIDA). Positions 348 to 363 (RSNSSRKSDSSFMSLR) are enriched in low complexity. S397 is subject to Phosphoserine. Disordered stretches follow at residues 418–476 (FENS…QSTF) and 538–568 (NKNS…RQSN). Polar residues-rich tracts occupy residues 420-429 (NSSSIQNSLG) and 461-476 (GRSQ…QSTF). A Phosphoserine modification is found at S575. The tract at residues 663–685 (IRKKSHNDAQSIAHSSSDTDHKD) is disordered. Phosphoserine is present on S707.

The protein belongs to the TORC subunit TCO89 family. As to quaternary structure, the target of rapamycin complex 1 (TORC1) is composed of at least KOG1, LST8, TCO89 and either TOR1 (TORC1-A) or TOR2 (TORC1-B). Interacts with PIB2; following activation of PIB2 by glutamine or cysteine. TORC1 binds to and is inhibited by FKBP-rapamycin.

It localises to the cell membrane. It is found in the vacuole membrane. Its function is as follows. Component of TORC1, which regulates multiple cellular processes to control cell growth in response to environmental signals. Nutrient limitation and environmental stress signals cause inactivation of TORC1. Active TORC1 positively controls ribosome biogenesis via control of rRNA, ribosomal protein and tRNA gene expression, and rRNA processing. TORC1 positively controls protein biosynthesis by regulation of mRNA stability, translation initiation factor activity, and high-affinity amino acid permeases that serve to provide amino acids for use by the translation machinery. TORC1 also promotes growth by sequestering a number of nutrient and general stress-responsive transcription factors in the cytoplasm. TORC1 negatively controls macroautophagy, a process to recycle surplus cytoplasmic mass under nutrient starvation conditions. This chain is Target of rapamycin complex 1 subunit TCO89 (TCO89), found in Saccharomyces cerevisiae (strain ATCC 204508 / S288c) (Baker's yeast).